Consider the following 115-residue polypeptide: NADH-ubiquinone oxidoreductase chain 3 (115 aa).

3 helical membrane passes run 3-23 (LIMTLFINITLTSLLVLIAFW), 55-75 (FFLVAITFLLFDLEIALLLPL), and 84-104 (LTTMLTTALLLISLLAVSLAY).

Belongs to the complex I subunit 3 family. Core subunit of respiratory chain NADH dehydrogenase (Complex I) which is composed of 45 different subunits. Interacts with TMEM186. Interacts with TMEM242.

The protein localises to the mitochondrion inner membrane. It catalyses the reaction a ubiquinone + NADH + 5 H(+)(in) = a ubiquinol + NAD(+) + 4 H(+)(out). Core subunit of the mitochondrial membrane respiratory chain NADH dehydrogenase (Complex I) which catalyzes electron transfer from NADH through the respiratory chain, using ubiquinone as an electron acceptor. Essential for the catalytic activity of complex I. This Ailurus fulgens (Himalayan red panda) protein is NADH-ubiquinone oxidoreductase chain 3.